Reading from the N-terminus, the 146-residue chain is Ribosome-binding factor A (146 aa).

Residues Gln122–Asn134 show a composition bias toward polar residues. A disordered region spans residues Gln122–Ala146. Positions Asp135 to Ala146 are enriched in acidic residues.

The protein belongs to the RbfA family. In terms of assembly, monomer. Binds 30S ribosomal subunits, but not 50S ribosomal subunits or 70S ribosomes.

Its subcellular location is the cytoplasm. One of several proteins that assist in the late maturation steps of the functional core of the 30S ribosomal subunit. Associates with free 30S ribosomal subunits (but not with 30S subunits that are part of 70S ribosomes or polysomes). Required for efficient processing of 16S rRNA. May interact with the 5'-terminal helix region of 16S rRNA. The protein is Ribosome-binding factor A of Shewanella sp. (strain ANA-3).